The sequence spans 421 residues: Osmoprotective compounds-binding protein GgtB (421 aa).

A signal peptide spans 1–18 (MKFFKITTLIISLIVLTS). A lipid anchor (N-palmitoyl cysteine) is attached at Cys-19. The S-diacylglycerol cysteine moiety is linked to residue Cys-19.

It belongs to the bacterial solute-binding protein 1 family. In terms of assembly, the complex is composed of two ATP-binding proteins (GgtA), two transmembrane proteins (GgtC and GgtD) and a solute-binding protein (GgtB).

It localises to the cell membrane. Part of the ABC transporter complex GgtABCD involved in the uptake of the osmoprotective compounds glucosylglycerol (GG), sucrose and trehalose. Binds glucosylglycerol and exhibits a somewhat lower affinity towards sucrose and a substantially lower affinity towards trehalose. This is Osmoprotective compounds-binding protein GgtB from Synechocystis sp. (strain ATCC 27184 / PCC 6803 / Kazusa).